We begin with the raw amino-acid sequence, 451 residues long: MADSMETHKFKVIIVGGSIAGLTLAHSLSKANIDHIVIEKRAEIAPQEGAFIGVWPNGAQILDQLGLYQSLEELTAPISRMHLSFPDDYSFSSFLPKTIHERFKYPIVSLDRQKVLEILFQNYPDKSNIITNQRVSEVRLLGDSASVVTEDGSVFRGDLIVGADGVHSPLTVEYACVFGISRPIPGLRSGEHINHYGDKFCVITFHGKDGRVFWFIIQKLDRVYTYPNAPRYSPNDAADLCGKMQNVVIWQDITVGDLWKTKVVASMTALEEGIFETWSLNRIVILGDSVHKMTPNIGQGANTAIEDVAVLASLINRMIHADDLNKPSESCIETMLQEYKSLRYEPAKSTYQRSRFGARFHTRDSWLKAVVGRYVFQYVGGLIENRTIKTLAGGDTIDFLPRPDRLETGRVAQFQKSEESPQRQWTLLWVSSLALFLFFPWLGSYLHSTIS.

The FAD site is built by E39, G53, and R112. The active site involves Y196. FAD contacts are provided by D288 and A301. Residue N385 is glycosylated (N-linked (GlcNAc...) asparagine). The chain crosses the membrane as a helical span at residues 426–446 (TLLWVSSLALFLFFPWLGSYL).

The protein belongs to the paxM FAD-dependent monooxygenase family. The cofactor is FAD.

The protein resides in the membrane. It participates in secondary metabolite biosynthesis; terpenoid biosynthesis. Its function is as follows. FAD-dependent monooxygenase; part of the gene cluster that mediates the biosynthesis of andrastins, meroterpenoid compounds that exhibit inhibitory activity against ras farnesyltransferase, suggesting that they could be promising leads for antitumor agents. The first step of the pathway is the synthesis of 3,5-dimethylorsellinic acid (DMOA) by the polyketide synthase adrD via condensation of one acetyl-CoA starter unit with 3 malonyl-CoA units and 2 methylations. DMAO is then converted to farnesyl-DMAO by the prenyltransferase adrG. The methyltransferase adrK catalyzes the methylation of the carboxyl group of farnesyl-DMAO to farnesyl-DMAO methyl ester which is further converted to epoxyfarnesyl-DMAO methyl ester by the FAD-dependent monooxygenase adrH. The terpene cyclase adrI then catalyzes the carbon skeletal rearrangement to generate the andrastin E, the first compound in the pathway having the andrastin scaffold, with the tetracyclic ring system. The post-cyclization tailoring enzymes adrF, adrE, adrJ, and adrA, are involved in the conversion of andrastin E into andrastin A. The short chain dehydrogenase adrF is responsible for the oxidation of the C-3 a hydroxyl group of andrastin E to yield the corresponding ketone, andrastin D. The ketoreductase adrE stereoselectively reduces the carbonyl moiety to reverse the stereochemistry of the C-3 position to yield andrastin F. The acetyltransferase adrJ is the acetyltransferase that attaches the acetyl group to the C-3 hydroxyl group of andrastin F to yield andrastin C. Finally, the cytochrome P450 monooxygenase adrA catalyzes two sequential oxidation reactions of the C-23 methyl group, to generate the corresponding alcohol andrastin B, and aldehyde andrastin A. The sequence is that of FAD-dependent monooxygenase adrH from Penicillium rubens (strain ATCC 28089 / DSM 1075 / NRRL 1951 / Wisconsin 54-1255) (Penicillium chrysogenum).